Here is a 264-residue protein sequence, read N- to C-terminus: Thymidylate synthase (264 aa).

Arginine 21 serves as a coordination point for dUMP. Histidine 51 contacts (6R)-5,10-methylene-5,6,7,8-tetrahydrofolate. Arginine 126 to arginine 127 provides a ligand contact to dUMP. Cysteine 146 serves as the catalytic Nucleophile. DUMP contacts are provided by residues arginine 166–aspartate 169, asparagine 177, and histidine 207–tyrosine 209. Position 169 (aspartate 169) interacts with (6R)-5,10-methylene-5,6,7,8-tetrahydrofolate. Residue alanine 263 participates in (6R)-5,10-methylene-5,6,7,8-tetrahydrofolate binding.

The protein belongs to the thymidylate synthase family. Bacterial-type ThyA subfamily. In terms of assembly, homodimer.

It is found in the cytoplasm. The enzyme catalyses dUMP + (6R)-5,10-methylene-5,6,7,8-tetrahydrofolate = 7,8-dihydrofolate + dTMP. It functions in the pathway pyrimidine metabolism; dTTP biosynthesis. Functionally, catalyzes the reductive methylation of 2'-deoxyuridine-5'-monophosphate (dUMP) to 2'-deoxythymidine-5'-monophosphate (dTMP) while utilizing 5,10-methylenetetrahydrofolate (mTHF) as the methyl donor and reductant in the reaction, yielding dihydrofolate (DHF) as a by-product. This enzymatic reaction provides an intracellular de novo source of dTMP, an essential precursor for DNA biosynthesis. The polypeptide is Thymidylate synthase (Nitrosomonas eutropha (strain DSM 101675 / C91 / Nm57)).